A 482-amino-acid polypeptide reads, in one-letter code: PAN domain-containing protein At5g03700 (482 aa).

A signal peptide spans 1–31; sequence MEGLCLNSFTRVLLLLFVFLVFSHKWQRVNA. In terms of domain architecture, PAN spans 330-411; that stretch reads CDKTTEFKVV…SKLGYFKVRE (82 aa). Intrachain disulfides connect Cys363–Cys385 and Cys367–Cys373. Residues 425–445 traverse the membrane as a helical segment; sequence GMSLLAVIALVLMVAMVYVGF.

Its subcellular location is the membrane. The sequence is that of PAN domain-containing protein At5g03700 from Arabidopsis thaliana (Mouse-ear cress).